A 100-amino-acid chain; its full sequence is Small ribosomal subunit protein uS14c (100 aa).

It belongs to the universal ribosomal protein uS14 family. In terms of assembly, part of the 30S ribosomal subunit.

It localises to the plastid. Its subcellular location is the chloroplast. In terms of biological role, binds 16S rRNA, required for the assembly of 30S particles. This is Small ribosomal subunit protein uS14c from Calycanthus floridus var. glaucus (Eastern sweetshrub).